The sequence spans 352 residues: Protein NDRG4 (352 aa).

3 positions are modified to phosphoserine: Ser-298, Ser-317, and Ser-323. The tract at residues 301–352 (AVPSASMTRLARSRTASLTSASSVDGSRPQPCTHSDSSEGMGQVNHTMEVSC) is disordered. The span at 308–323 (TRLARSRTASLTSASS) shows a compositional bias: low complexity. Residues 330–352 (QPCTHSDSSEGMGQVNHTMEVSC) are compositionally biased toward polar residues.

The protein belongs to the NDRG family. In terms of tissue distribution, expressed in the brain and heart, weakly in the kidney; most prominently in postnatal brain where it is expressed widely in the olfactory bulb, cerebral cortex, hippocampus, cerebellum, thalamus, and medulla oblongata.

It is found in the cytoplasm. It localises to the cytosol. Contributes to the maintenance of intracerebral BDNF levels within the normal range, which is necessary for the preservation of spatial learning and the resistance to neuronal cell death caused by ischemic stress. May enhance growth factor-induced ERK1 and ERK2 phosphorylation, including that induced by NGF. May attenuate NGF-promoted ELK1 phosphorylation in a microtubule-dependent manner. The polypeptide is Protein NDRG4 (Ndrg4) (Rattus norvegicus (Rat)).